The sequence spans 246 residues: 1-(5-phosphoribosyl)-5-[(5-phosphoribosylamino)methylideneamino] imidazole-4-carboxamide isomerase (246 aa).

Residue D10 is the Proton acceptor of the active site. Catalysis depends on D135, which acts as the Proton donor.

The protein belongs to the HisA/HisF family.

It localises to the cytoplasm. The catalysed reaction is 1-(5-phospho-beta-D-ribosyl)-5-[(5-phospho-beta-D-ribosylamino)methylideneamino]imidazole-4-carboxamide = 5-[(5-phospho-1-deoxy-D-ribulos-1-ylimino)methylamino]-1-(5-phospho-beta-D-ribosyl)imidazole-4-carboxamide. It functions in the pathway amino-acid biosynthesis; L-histidine biosynthesis; L-histidine from 5-phospho-alpha-D-ribose 1-diphosphate: step 4/9. This Methanosarcina mazei (strain ATCC BAA-159 / DSM 3647 / Goe1 / Go1 / JCM 11833 / OCM 88) (Methanosarcina frisia) protein is 1-(5-phosphoribosyl)-5-[(5-phosphoribosylamino)methylideneamino] imidazole-4-carboxamide isomerase.